The chain runs to 325 residues: GMP reductase (325 aa).

Cys-173 (thioimidate intermediate) is an active-site residue. 202-225 (IIADGGIRSHGDIAKSIRFGATMV) serves as a coordination point for NADP(+).

It belongs to the IMPDH/GMPR family. GuaC type 2 subfamily.

The enzyme catalyses IMP + NH4(+) + NADP(+) = GMP + NADPH + 2 H(+). Catalyzes the irreversible NADPH-dependent deamination of GMP to IMP. It functions in the conversion of nucleobase, nucleoside and nucleotide derivatives of G to A nucleotides, and in maintaining the intracellular balance of A and G nucleotides. The chain is GMP reductase from Paracidovorax citrulli (strain AAC00-1) (Acidovorax citrulli).